Here is a 187-residue protein sequence, read N- to C-terminus: Ribosome-recycling factor (187 aa).

It belongs to the RRF family.

It localises to the cytoplasm. Responsible for the release of ribosomes from messenger RNA at the termination of protein biosynthesis. May increase the efficiency of translation by recycling ribosomes from one round of translation to another. The sequence is that of Ribosome-recycling factor from Mycoplasmopsis pulmonis (strain UAB CTIP) (Mycoplasma pulmonis).